Reading from the N-terminus, the 153-residue chain is Aspartate carbamoyltransferase regulatory chain (153 aa).

Positions 109, 114, 138, and 141 each coordinate Zn(2+).

Belongs to the PyrI family. As to quaternary structure, contains catalytic and regulatory chains. Zn(2+) is required as a cofactor.

Functionally, involved in allosteric regulation of aspartate carbamoyltransferase. The protein is Aspartate carbamoyltransferase regulatory chain of Klebsiella pneumoniae subsp. pneumoniae (strain ATCC 700721 / MGH 78578).